Here is a 479-residue protein sequence, read N- to C-terminus: Glutamate--tRNA ligase (479 aa).

The 'HIGH' region signature appears at 21 to 31 (PSPTGYLHVGG). The 'KMSKS' region signature appears at 248-252 (KLSKR). ATP is bound at residue Lys-251.

It belongs to the class-I aminoacyl-tRNA synthetase family. Glutamate--tRNA ligase type 1 subfamily. In terms of assembly, monomer.

It is found in the cytoplasm. The enzyme catalyses tRNA(Glu) + L-glutamate + ATP = L-glutamyl-tRNA(Glu) + AMP + diphosphate. Catalyzes the attachment of glutamate to tRNA(Glu) in a two-step reaction: glutamate is first activated by ATP to form Glu-AMP and then transferred to the acceptor end of tRNA(Glu). This is Glutamate--tRNA ligase from Actinobacillus pleuropneumoniae serotype 7 (strain AP76).